The sequence spans 271 residues: MASADSRRVADGGGAGGTFQPYLDTLRQELQQTDPTLLSVVVAVLAVLLTLVFWKLIRSRRSSQRAVLLVGLCDSGKTLLFVRLLTGLYRDTQTSITDSCAVYRVNNNRGNSLTLIDLPGHESLRLQFLERFKSSARAIVFVVDSAAFQREVKDVAEFLYQVLIDSMGLKNTPSFLIACNKQDIAMAKSAKLIQQQLEKELNTLRVTRSAAPSTLDSSSTAPAQLGKKGKEFEFSQLPLKVEFLECSAKGGRGDVGSADIQDLEKWLAKIA.

A helical membrane pass occupies residues 37–57 (LLSVVVAVLAVLLTLVFWKLI). GTP-binding positions include 71-79 (GLCDSGKTL) and 92-95 (TQTS). S112 bears the Phosphoserine mark. G120 provides a ligand contact to GTP. Residue T214 is modified to Phosphothreonine. A GTP-binding site is contributed by A248.

The protein belongs to the SRP receptor beta subunit family. In terms of assembly, heterodimer with SRPRA.

It localises to the endoplasmic reticulum membrane. Component of the signal recognition particle (SRP) complex receptor (SR). Ensures, in conjunction with the SRP complex, the correct targeting of the nascent secretory proteins to the endoplasmic reticulum membrane system. May mediate the membrane association of SR. The chain is Signal recognition particle receptor subunit beta (SRPRB) from Homo sapiens (Human).